The chain runs to 532 residues: Beta-hexosaminidase subunit A1 (532 aa).

The first 18 residues, 1 to 18, serve as a signal peptide directing secretion; sequence MIKKIILFFAVLIAIVIG. Residues Asn-72 and Asn-79 are each glycosylated (N-linked (GlcNAc...) asparagine). Glu-308 (proton donor) is an active-site residue. Residues Asn-350 and Asn-427 are each glycosylated (N-linked (GlcNAc...) asparagine).

Belongs to the glycosyl hydrolase 20 family. As to quaternary structure, dimer. The N-terminus is blocked. Post-translationally, N-glycosylated.

The protein localises to the lysosome. The catalysed reaction is Hydrolysis of terminal non-reducing N-acetyl-D-hexosamine residues in N-acetyl-beta-D-hexosaminides.. Responsible for the degradation of GM2 gangliosides, and a variety of other molecules containing terminal N-acetyl hexosamines. This enzyme plays a role during the slug stage of development in the maintenance of pseudoplasmodia of normal size. The sequence is that of Beta-hexosaminidase subunit A1 (hexa1) from Dictyostelium discoideum (Social amoeba).